The chain runs to 160 residues: Keratin-associated protein 9-6 (160 aa).

Repeat copies occupy residues 4–8, 13–17, 18–22, 37–41, 42–46, 47–51, 56–60, 61–65, 66–70, 75–79, 80–84, 90–94, 95–99, 140–144, 149–153, and 154–158. The 16 X 5 AA repeats of C-C-[GSVRQ]-[QTSPHN]-[TPSGYC] stretch occupies residues 4 to 158; the sequence is CCSPGCQPTC…CCVSSCCQHS (155 aa).

Belongs to the KRTAP type 9 family. Interacts with hair keratins.

Functionally, in the hair cortex, hair keratin intermediate filaments are embedded in an interfilamentous matrix, consisting of hair keratin-associated proteins (KRTAP), which are essential for the formation of a rigid and resistant hair shaft through their extensive disulfide bond cross-linking with abundant cysteine residues of hair keratins. The matrix proteins include the high-sulfur and high-glycine-tyrosine keratins. The protein is Keratin-associated protein 9-6 of Homo sapiens (Human).